A 304-amino-acid polypeptide reads, in one-letter code: N-acetylglucosaminyl-phosphatidylinositol de-N-acetylase (304 aa).

Residues 1 to 20 (MKMLRRTKVNFSKLLYKITK) are Lumenal-facing. The chain crosses the membrane as a helical span at residues 21–38 (LAIVLTILYIYFTPKIVS). Over 39-304 (RNNASLQHIF…FVNEFDVYTY (266 aa)) the chain is Cytoplasmic.

The protein belongs to the PIGL family.

It localises to the endoplasmic reticulum membrane. The catalysed reaction is a 6-(N-acetyl-alpha-D-glucosaminyl)-1-(1,2-diacyl-sn-glycero-3-phospho)-1D-myo-inositol + H2O = a 6-(alpha-D-glucosaminyl)-1-(1,2-diacyl-sn-glycero-3-phospho)-1D-myo-inositol + acetate. The protein operates within glycolipid biosynthesis; glycosylphosphatidylinositol-anchor biosynthesis. Functionally, involved in the second step of GPI biosynthesis. De-N-acetylation of N-acetylglucosaminyl-phosphatidylinositol. The sequence is that of N-acetylglucosaminyl-phosphatidylinositol de-N-acetylase (GPI12) from Saccharomyces cerevisiae (strain ATCC 204508 / S288c) (Baker's yeast).